The chain runs to 255 residues: Folate receptor beta (255 aa).

An N-terminal signal peptide occupies residues 1-16 (MVWKWMPLLLLLVCVA). Cystine bridges form between Cys31/Cys59, Cys51/Cys99, Cys60/Cys103, Cys83/Cys169, Cys90/Cys140, Cys129/Cys203, Cys133/Cys183, and Cys146/Cys163. 2 residues coordinate folate: Asp97 and Tyr101. N-linked (GlcNAc...) asparagine glycosylation is present at Asn115. Folate-binding positions include 118–122 (WRKER), 151–156 (HRGWDW), and Ser190. N-linked (GlcNAc...) asparagine glycosylation is present at Asn195. Asn230 carries GPI-anchor amidated asparagine lipidation. The propeptide at 231–255 (AGEMLHGTGGLLLSLALMLQLWLLG) is removed in mature form.

It belongs to the folate receptor family. Post-translationally, N-glycosylated. Expressed in placenta and hematopoietic cells. Expression is increased in malignant tissues.

Its subcellular location is the cell membrane. It is found in the secreted. Functionally, binds to folate and reduced folic acid derivatives and mediates delivery of 5-methyltetrahydrofolate and folate analogs into the interior of cells. Has high affinity for folate and folic acid analogs at neutral pH. Exposure to slightly acidic pH after receptor endocytosis triggers a conformation change that strongly reduces its affinity for folates and mediates their release. The sequence is that of Folate receptor beta (FOLR2) from Homo sapiens (Human).